Here is a 61-residue protein sequence, read N- to C-terminus: Large ribosomal subunit protein uL30 (61 aa).

Belongs to the universal ribosomal protein uL30 family. As to quaternary structure, part of the 50S ribosomal subunit.

In Francisella tularensis subsp. tularensis (strain FSC 198), this protein is Large ribosomal subunit protein uL30.